The sequence spans 319 residues: F-box only protein 8 (319 aa).

An F-box domain is found at 68–111 (FINLEMLPPELSFTILSYLNATDLCLASCVWQDLANDELLWQGL). In terms of domain architecture, SEC7 spans 146–276 (FNANPDEGVN…LILLSIDLTS (131 aa)).

Functionally, may promote guanine-nucleotide exchange on an ARF. Promotes the activation of ARF through replacement of GDP with GTP (Potential). The chain is F-box only protein 8 (FBXO8) from Homo sapiens (Human).